Here is a 529-residue protein sequence, read N- to C-terminus: MLLAVLYCLLWSFQTSAGHFPRACVSSKNLMEKECCPPWSGDRSPCGQLSGRGSCQNILLSNAPLGPQFPFTGVDDRESWPSVFYNRTCQCSGNFMGFNCGNCKFGFWGPNCTERRLLVRRNIFDLSAPEKDKFFAYLTLAKHTISSDYVIPIGTYGQMKNGSTPMFNDINIYDLFVWMHYYVSMDALLGGSEIWRDIDFAHEAPAFLPWHRLFLLRWEQEIQKLTGDENFTIPYWDWRDAEKCDICTDEYMGGQHPTNPNLLSPASFFSSWQIVCSRLEEYNSHQSLCNGTPEGPLQRNPGNHDKSRTPRLPSSADVEFCLSLTQYESGSMDKAANFSFRNTLEGFASPLTGIADASQSSMHNALHIYMNGTMSQVQGSANDPIFLLHHAFVDSIFEQWLRRHRPLQEVYPEANAPIGHNRESYMVPFIPLYRNGDFFISSKDLGYDYSYLQDSDPDSFQDYIKSYLEQASRIWSWLLGAAMVGAVLTALLAGLVSLLCRHKRKQLPEEKQPLLMEKEDYHSLYQSHL.

Residues Met1 to Gly18 form the signal peptide. The Lumenal, melanosome portion of the chain corresponds to His19 to Ser476. 3 N-linked (GlcNAc...) asparagine glycosylation sites follow: Asn86, Asn111, and Asn161. Positions 180, 202, and 211 each coordinate Cu cation. N-linked (GlcNAc...) asparagine glycosylation is present at Asn230. Residues Ser287 to Pro313 are disordered. N-linked (GlcNAc...) asparagine glycosylation occurs at Asn337. Cu cation contacts are provided by His363 and His367. Residue Asn371 is glycosylated (N-linked (GlcNAc...) asparagine). Position 390 (His390) interacts with Cu cation. Residues Trp477–Ser497 traverse the membrane as a helical segment. Over Leu498 to Leu529 the chain is Cytoplasmic.

This sequence belongs to the tyrosinase family. As to quaternary structure, forms an OPN3-dependent complex with DCT in response to blue light in melanocytes. The cofactor is Cu(2+). Glycosylated.

Its subcellular location is the melanosome membrane. The protein localises to the melanosome. The enzyme catalyses 2 L-dopa + O2 = 2 L-dopaquinone + 2 H2O. The catalysed reaction is L-tyrosine + O2 = L-dopaquinone + H2O. It catalyses the reaction 2 5,6-dihydroxyindole-2-carboxylate + O2 = 2 indole-5,6-quinone-2-carboxylate + 2 H2O. Functionally, this is a copper-containing oxidase that functions in the formation of pigments such as melanins and other polyphenolic compounds. Catalyzes the initial and rate limiting step in the cascade of reactions leading to melanin production from tyrosine. In addition to hydroxylating tyrosine to DOPA (3,4-dihydroxyphenylalanine), also catalyzes the oxidation of DOPA to DOPA-quinone, and possibly the oxidation of DHI (5,6-dihydroxyindole) to indole-5,6 quinone. This chain is Tyrosinase (TYR), found in Gorilla gorilla gorilla (Western lowland gorilla).